We begin with the raw amino-acid sequence, 219 residues long: Holliday junction branch migration complex subunit RuvA (219 aa).

A domain I region spans residues 1–67; it reads MIGWLRGERI…DDGSSLFGFP (67 aa). The segment at 68-146 is domain II; sequence DRRERDLFRV…AWSAEKNSDH (79 aa). Residues 147–161 are flexible linker; it reads SDLSLVDRSDLKSLP. Residues 162–219 are domain III; it reads IEPDPLQDLQLTLSTLGYEDLEIRRAMRAVATGEEVPAANDGDGWLRASLRWLNRPSA.

Belongs to the RuvA family. As to quaternary structure, homotetramer. Forms an RuvA(8)-RuvB(12)-Holliday junction (HJ) complex. HJ DNA is sandwiched between 2 RuvA tetramers; dsDNA enters through RuvA and exits via RuvB. An RuvB hexamer assembles on each DNA strand where it exits the tetramer. Each RuvB hexamer is contacted by two RuvA subunits (via domain III) on 2 adjacent RuvB subunits; this complex drives branch migration. In the full resolvosome a probable DNA-RuvA(4)-RuvB(12)-RuvC(2) complex forms which resolves the HJ.

It localises to the cytoplasm. Functionally, the RuvA-RuvB-RuvC complex processes Holliday junction (HJ) DNA during genetic recombination and DNA repair, while the RuvA-RuvB complex plays an important role in the rescue of blocked DNA replication forks via replication fork reversal (RFR). RuvA specifically binds to HJ cruciform DNA, conferring on it an open structure. The RuvB hexamer acts as an ATP-dependent pump, pulling dsDNA into and through the RuvAB complex. HJ branch migration allows RuvC to scan DNA until it finds its consensus sequence, where it cleaves and resolves the cruciform DNA. The protein is Holliday junction branch migration complex subunit RuvA of Synechococcus sp. (strain CC9311).